Reading from the N-terminus, the 272-residue chain is Indole-3-glycerol phosphate synthase (272 aa).

Belongs to the TrpC family.

It catalyses the reaction 1-(2-carboxyphenylamino)-1-deoxy-D-ribulose 5-phosphate + H(+) = (1S,2R)-1-C-(indol-3-yl)glycerol 3-phosphate + CO2 + H2O. It functions in the pathway amino-acid biosynthesis; L-tryptophan biosynthesis; L-tryptophan from chorismate: step 4/5. The chain is Indole-3-glycerol phosphate synthase from Mycobacterium tuberculosis (strain ATCC 25177 / H37Ra).